Here is a 330-residue protein sequence, read N- to C-terminus: Probable cell division protein WhiA (330 aa).

Positions 275–308 form a DNA-binding region, H-T-H motif; it reads SLDELGRLSDPPLTKDAIAGRIRRLLAMADRRAE.

This sequence belongs to the WhiA family.

In terms of biological role, involved in cell division and chromosome segregation. The protein is Probable cell division protein WhiA of Kocuria rhizophila (strain ATCC 9341 / DSM 348 / NBRC 103217 / DC2201).